We begin with the raw amino-acid sequence, 315 residues long: Leucine-rich repeat-containing protein 75B (315 aa).

The interval 1–23 is disordered; that stretch reads MGARLGRRAGPEAGSEAGAAAGC. The segment covering 11–23 has biased composition (low complexity); sequence PEAGSEAGAAAGC. LRR repeat units follow at residues 182–195 and 207–220; these read LAVL…LSDE and LPRL…GNRL. A disordered region spans residues 284 to 315; it reads PEGSAAGATTPASTWDSTAAGLGPEPQACCAR. Positions 286–297 are enriched in low complexity; that stretch reads GSAAGATTPAST.

It belongs to the LRRC75 family.

May suppress myogenic differentiation by modulating MYOG expression and Erk1/2 signaling. This chain is Leucine-rich repeat-containing protein 75B, found in Homo sapiens (Human).